The following is a 409-amino-acid chain: Autotransproter heptosyltransferase BAHTCr (409 aa).

Residues threonine 107, leucine 108, and glycine 109 each coordinate ADP-D-glycero-beta-D-manno-heptose. The Proton acceptor role is filled by aspartate 110. Residues glutamine 224, threonine 226, lysine 230, arginine 257, glycine 302, and glutamate 326 each contribute to the ADP-D-glycero-beta-D-manno-heptose site. The Fe(3+) site is built by cysteine 339, cysteine 342, cysteine 358, and cysteine 370.

The protein belongs to the glycosyltransferase 9 family. Homododecamer composed of 6 homodimers forming a ring. The cofactor is Fe(3+).

The protein resides in the cytoplasm. It catalyses the reaction ADP-D-glycero-beta-D-manno-heptose + L-seryl-[protein] = O-(D-glycero-alpha-D-manno-heptosyl)-L-seryl-[protein] + ADP + H(+). It carries out the reaction ADP-L-glycero-beta-D-manno-heptose + L-seryl-[protein] = O-(L-glycero-alpha-D-manno-heptosyl)-L-seryl-[protein] + ADP + H(+). Functionally, glycosylates autotransporter CARC. By glycosylating CARC, involved in the colonization of the mouse host gastrointestinal tract. The protein is Autotransproter heptosyltransferase BAHTCr of Citrobacter rodentium (strain ICC168) (Citrobacter freundii biotype 4280).